Here is a 232-residue protein sequence, read N- to C-terminus: Uracil-DNA glycosylase (232 aa).

Aspartate 66 functions as the Proton acceptor in the catalytic mechanism.

Belongs to the uracil-DNA glycosylase (UDG) superfamily. UNG family.

It is found in the cytoplasm. The catalysed reaction is Hydrolyzes single-stranded DNA or mismatched double-stranded DNA and polynucleotides, releasing free uracil.. In terms of biological role, excises uracil residues from the DNA which can arise as a result of misincorporation of dUMP residues by DNA polymerase or due to deamination of cytosine. The sequence is that of Uracil-DNA glycosylase from Lactobacillus acidophilus (strain ATCC 700396 / NCK56 / N2 / NCFM).